Here is a 195-residue protein sequence, read N- to C-terminus: Proline-rich protein 3 (195 aa).

The N-terminal stretch at 1–29 (MKMNFFNSFPQYGVYILGLNLLLCGVSEG) is a signal peptide.

In terms of tissue distribution, component of the acid-insoluble organic matrix of calcified layers of the shell (at protein level).

The protein resides in the secreted. The polypeptide is Proline-rich protein 3 (Lottia gigantea (Giant owl limpet)).